The sequence spans 65 residues: Large ribosomal subunit protein bL35 (65 aa).

Belongs to the bacterial ribosomal protein bL35 family.

The polypeptide is Large ribosomal subunit protein bL35 (Neisseria meningitidis serogroup A / serotype 4A (strain DSM 15465 / Z2491)).